Here is a 450-residue protein sequence, read N- to C-terminus: tRNA-2-methylthio-N(6)-dimethylallyladenosine synthase (450 aa).

Residues 8–128 (KRLYIKTYGC…LPELIARAHR (121 aa)) enclose the MTTase N-terminal domain. 6 residues coordinate [4Fe-4S] cluster: cysteine 17, cysteine 53, cysteine 91, cysteine 166, cysteine 170, and cysteine 173. Positions 152–382 (RPTGVTAFLT…QALLEQQQLA (231 aa)) constitute a Radical SAM core domain. In terms of domain architecture, TRAM spans 385–447 (AAQAGRVLPV…RNSLAGVLEL (63 aa)).

Belongs to the methylthiotransferase family. MiaB subfamily. Monomer. Requires [4Fe-4S] cluster as cofactor.

It is found in the cytoplasm. It catalyses the reaction N(6)-dimethylallyladenosine(37) in tRNA + (sulfur carrier)-SH + AH2 + 2 S-adenosyl-L-methionine = 2-methylsulfanyl-N(6)-dimethylallyladenosine(37) in tRNA + (sulfur carrier)-H + 5'-deoxyadenosine + L-methionine + A + S-adenosyl-L-homocysteine + 2 H(+). Its function is as follows. Catalyzes the methylthiolation of N6-(dimethylallyl)adenosine (i(6)A), leading to the formation of 2-methylthio-N6-(dimethylallyl)adenosine (ms(2)i(6)A) at position 37 in tRNAs that read codons beginning with uridine. This Phenylobacterium zucineum (strain HLK1) protein is tRNA-2-methylthio-N(6)-dimethylallyladenosine synthase.